The sequence spans 462 residues: MSLGQLSYTPVTDVGIGAIELYFPQNFVDQNDLEKFNNVSSGKYTIGLGQQQMGFCSDNEDIVSISLTVTRKLIETYKISTDSIGCLVVGTETMIDKSKSVKTALMDLFPGNSDIEGVDIKNACFGGAQALLHAIDWVTVNHPLDKKNAIVVVADIAIYEEGPARCTGGAGAIAFLICPDASIPIDRQFSACHMKNTWDFFKPITPIPSEYPVVDGSLSLSSYLEAVRMTYTYFISKVNRHTTGIDGLNSFDGVFLHSPFTKMVQKGLAVMNYTDSQLRHKQLNGNGVDHKLDENDRAGLAKMIELSAQVWKEKTDPYLVFNRRIGNMYTPSLFAQLLAYLAADDCVTGEKSILFFAYGSGLASAIFPGRVRQTSNLDKIRQVAIRAIKRLDDRIQFTPEEFTETLQKREVFLRSKEIPKSPSETSLFPNTYFLDNMDKLYRRSYTLHEEPNGVQNGNGIHH.

Glutamate 92 acts as the Proton donor/acceptor in catalysis. Residue cysteine 124 is the Acyl-thioester intermediate of the active site. The (3S)-3-hydroxy-3-methylglutaryl-CoA site is built by cysteine 124, threonine 167, serine 219, histidine 257, lysine 266, asparagine 327, and serine 360. Catalysis depends on histidine 257, which acts as the Proton donor/acceptor. Lysine 408 participates in a covalent cross-link: Glycyl lysine isopeptide (Lys-Gly) (interchain with G-Cter in SUMO).

It belongs to the thiolase-like superfamily. HMG-CoA synthase family. In terms of processing, ubiquitinated.

It carries out the reaction acetoacetyl-CoA + acetyl-CoA + H2O = (3S)-3-hydroxy-3-methylglutaryl-CoA + CoA + H(+). The protein operates within metabolic intermediate biosynthesis; (R)-mevalonate biosynthesis; (R)-mevalonate from acetyl-CoA: step 2/3. Functionally, this enzyme condenses acetyl-CoA with acetoacetyl-CoA to form HMG-CoA, which is the substrate for HMG-CoA reductase. The chain is Hydroxymethylglutaryl-CoA synthase from Caenorhabditis elegans.